The sequence spans 689 residues: MSEKTFLVEIGTEELPPKALRSLAESFAANFTAELDNAGLAHGTVQWFAAPRRLALKVANLAEAQPDREIEKRGPAIAQAFDAEGKPSKAAEGWARGCGITVDQAERLTTDKGEWLLYRAHVKGESTEALLPNMVATSLAKLPIPKLMRWGASDVHFVRPVHTVTLLLGDKVIPATILGIQSDRVIRGHRFMGEPEFTIDNADQYPEILRERGKVIADYEERKAKIKADAEEAARKIGGNADLSESLLEEVASLVEWPVVLTAKFEEKFLAVPSEALVYTMKGDQKYFPVYANDGKLLPNFIFVANIESKDPQQIISGNEKVVRPRLADAEFFFNTDRKKRLEDNLPRLQTVLFQQQLGTLRDKTDRIQALAGWIAEQIGADVNHATRAGLLSKCDLMTNMVFEFTDTQGVMGMHYARHDGEAEDVAVALNEQYQPRFAGDDLPSNPVACALAIADKMDTLAGIFGIGQHPKGDKDPFALRRAALGVLRIIVEKNLNLDLQTLTEEAVRLYGDKLTNANVVDDVIDFMLGRFRAWYQDEGYTVDTIQAVLARRPTRPADFDARMKAVSHFRTLEAAAALAAANKRVSNILAKSDEVLSDRVNASTLKEPEEIKLAMQVVVLRDKLEPYFAEGRYQDALVELAELREPVDAFFDKVMVMVDDKELRINRLTMLEKLRELFLRVADISLLQ.

The protein belongs to the class-II aminoacyl-tRNA synthetase family. In terms of assembly, tetramer of two alpha and two beta subunits.

Its subcellular location is the cytoplasm. The enzyme catalyses tRNA(Gly) + glycine + ATP = glycyl-tRNA(Gly) + AMP + diphosphate. The chain is Glycine--tRNA ligase beta subunit from Escherichia coli O127:H6 (strain E2348/69 / EPEC).